A 148-amino-acid chain; its full sequence is Aspartate 1-decarboxylase (148 aa).

The Schiff-base intermediate with substrate; via pyruvic acid role is filled by serine 25. Residue serine 25 is modified to Pyruvic acid (Ser). Residue threonine 57 coordinates substrate. Tyrosine 58 (proton donor) is an active-site residue. 73–75 (GAA) lines the substrate pocket.

It belongs to the PanD family. Heterooctamer of four alpha and four beta subunits. Pyruvate is required as a cofactor. Post-translationally, is synthesized initially as an inactive proenzyme, which is activated by self-cleavage at a specific serine bond to produce a beta-subunit with a hydroxyl group at its C-terminus and an alpha-subunit with a pyruvoyl group at its N-terminus.

Its subcellular location is the cytoplasm. The enzyme catalyses L-aspartate + H(+) = beta-alanine + CO2. It participates in cofactor biosynthesis; (R)-pantothenate biosynthesis; beta-alanine from L-aspartate: step 1/1. Its function is as follows. Catalyzes the pyruvoyl-dependent decarboxylation of aspartate to produce beta-alanine. This is Aspartate 1-decarboxylase from Rhodococcus erythropolis (strain PR4 / NBRC 100887).